The primary structure comprises 1051 residues: Probable valine--tRNA ligase, mitochondrial (1051 aa).

The transit peptide at 1-20 directs the protein to the mitochondrion; that stretch reads MNKLLFLSKKSSTSNLYRFY. The 'HIGH' region motif lies at 71–81; sequence PNVTGSLHIGH. The 'KMSKS' region signature appears at 606–610; sequence KMSKS. Lys-609 lines the ATP pocket. The stretch at 972 to 1019 forms a coiled coil; that stretch reads KELQISIEFDKEINNQLNQKLINPNQSNDKKILKLENFIKQLQDEIDN.

Belongs to the class-I aminoacyl-tRNA synthetase family.

It localises to the mitochondrion. The enzyme catalyses tRNA(Val) + L-valine + ATP = L-valyl-tRNA(Val) + AMP + diphosphate. In Dictyostelium discoideum (Social amoeba), this protein is Probable valine--tRNA ligase, mitochondrial (valS2).